The sequence spans 427 residues: UDP-N-acetyl-D-mannosamine dehydrogenase (427 aa).

Tyr-19, Ile-20, Asp-39, Arg-44, Thr-91, and Thr-130 together coordinate NAD(+). UDP-N-acetyl-alpha-D-mannosaminouronate contacts are provided by Arg-155, Val-156, Lys-207, Asn-211, Arg-214, His-245, Arg-247, and Gly-258. The active-site Proton donor/acceptor is Lys-207. The active-site Nucleophile is Cys-261. Positions 318 and 319 each coordinate UDP-N-acetyl-alpha-D-mannosaminouronate. Residue Arg-326 participates in NAD(+) binding. Residue Lys-404 participates in UDP-N-acetyl-alpha-D-mannosaminouronate binding.

It belongs to the UDP-glucose/GDP-mannose dehydrogenase family. As to quaternary structure, homotetramer; probably dimer of dimers.

The enzyme catalyses UDP-N-acetyl-alpha-D-mannosamine + 2 NAD(+) + H2O = UDP-N-acetyl-alpha-D-mannosaminouronate + 2 NADH + 3 H(+). Catalyzes the four-electron oxidation of UDP-N-acetyl-D-mannosamine (UDP-ManNAc), reducing NAD(+) and releasing UDP-N-acetylmannosaminuronic acid (UDP-ManNAcA). The chain is UDP-N-acetyl-D-mannosamine dehydrogenase (wecC) from Methanococcus maripaludis (strain C7 / ATCC BAA-1331).